The following is a 51-amino-acid chain: MREKIRLVSSAGTGHFYTTTKNKRTMPEKMEIKKFDPVVRKHVAYKEAKIK.

It belongs to the bacterial ribosomal protein bL33 family.

This Hahella chejuensis (strain KCTC 2396) protein is Large ribosomal subunit protein bL33.